Reading from the N-terminus, the 428-residue chain is Protein terminus (428 aa).

A C3H1-type zinc finger spans residues 325–346 (CRRCRTQFSRRSKLHIHQKLRC).

In Drosophila melanogaster (Fruit fly), this protein is Protein terminus (term).